The following is a 429-amino-acid chain: UDP-glucuronate 4-epimerase 1 (429 aa).

The next 2 helical transmembrane spans lie at 36–56 (FLWA…QSFV) and 87–107 (GISV…SLAL). 89-120 (SVLVTGATGFVGSHVSLALRKRGDGVVGLDNF) lines the NAD(+) pocket. Tyrosine 239 acts as the Proton acceptor in catalysis.

The protein belongs to the NAD(P)-dependent epimerase/dehydratase family. Homodimer. In root stele, leaves, siliques, flowers, pollen and stems.

Its subcellular location is the golgi apparatus. It localises to the golgi stack membrane. It carries out the reaction UDP-alpha-D-glucuronate = UDP-alpha-D-galacturonate. With respect to regulation, inhibited by UDP-Xylose. In terms of biological role, UDP-D-glucuronate 4-epimerase involved in the synthesis of the negatively charged monosaccharide that forms the backbone of pectic cell wall components. This chain is UDP-glucuronate 4-epimerase 1 (GAE1), found in Arabidopsis thaliana (Mouse-ear cress).